We begin with the raw amino-acid sequence, 453 residues long: Phosphoglucosamine mutase (453 aa).

Catalysis depends on Ser-102, which acts as the Phosphoserine intermediate. Positions 102, 243, 245, and 247 each coordinate Mg(2+). A Phosphoserine modification is found at Ser-102.

It belongs to the phosphohexose mutase family. Requires Mg(2+) as cofactor. Activated by phosphorylation.

The catalysed reaction is alpha-D-glucosamine 1-phosphate = D-glucosamine 6-phosphate. Catalyzes the conversion of glucosamine-6-phosphate to glucosamine-1-phosphate. In Bartonella tribocorum (strain CIP 105476 / IBS 506), this protein is Phosphoglucosamine mutase.